A 254-amino-acid polypeptide reads, in one-letter code: 3-deoxy-manno-octulosonate cytidylyltransferase (254 aa).

This sequence belongs to the KdsB family.

It is found in the cytoplasm. The enzyme catalyses 3-deoxy-alpha-D-manno-oct-2-ulosonate + CTP = CMP-3-deoxy-beta-D-manno-octulosonate + diphosphate. Its pathway is nucleotide-sugar biosynthesis; CMP-3-deoxy-D-manno-octulosonate biosynthesis; CMP-3-deoxy-D-manno-octulosonate from 3-deoxy-D-manno-octulosonate and CTP: step 1/1. It participates in bacterial outer membrane biogenesis; lipopolysaccharide biosynthesis. In terms of biological role, activates KDO (a required 8-carbon sugar) for incorporation into bacterial lipopolysaccharide in Gram-negative bacteria. The sequence is that of 3-deoxy-manno-octulosonate cytidylyltransferase from Polynucleobacter necessarius subsp. necessarius (strain STIR1).